A 790-amino-acid chain; its full sequence is SH3 domain-containing protein 19 (790 aa).

Disordered stretches follow at residues 21–196 (EGQT…PVLQ) and 241–374 (EPIK…MDLQ). Ser-65 carries the phosphoserine modification. Residues 287–296 (NTFSTVSGKL) are compositionally biased toward polar residues. Positions 336–351 (QQPPTKVPPERPPPPK) are enriched in pro residues. Positions 342 to 358 (VPPERPPPPKLSATRRS) are interaction with SH3GL1. Positions 365–374 (NRSSSDMDLQ) are enriched in polar residues. Position 369 is a phosphoserine (Ser-369). SH3 domains lie at 415–477 (LSVP…PLDE), 495–554 (SGAP…VIID), 571–630 (VKGS…PVED), 661–720 (LPAE…PCPA), and 730–789 (PKGR…FLQI). Ser-762 is modified (phosphoserine).

Interacts with ADAM12. Isoform 4 and isoform 5 (but not isoform 1 and isoform 2) interact with ADAM9, ADAM10, ADAM15 and ADAM17. Interacts with SH3GL1 SH3 domain. Interacts via SH3 3 and SH3 4 or SH3 4 and SH3 5 domains with SOS2. Probably forms a trimeric complex with SH3GL1 and SOS2. Interacts with SH3YL1. Widely expressed with highest levels in heart, skeletal muscle, kidney, liver, placenta, small intestine and lung. Expressed at low levels in colon, thymus, spleen and leukocytes.

It is found in the cytoplasm. The protein resides in the nucleus. May play a role in regulating A disintegrin and metalloproteases (ADAMs) in the signaling of EGFR-ligand shedding. May be involved in suppression of Ras-induced cellular transformation and Ras-mediated activation of ELK1. Plays a role in the regulation of cell morphology and cytoskeletal organization. This Homo sapiens (Human) protein is SH3 domain-containing protein 19 (SH3D19).